Consider the following 25-residue polypeptide: Kunitz-type serine protease inhibitor 2 (25 aa).

The BPTI/Kunitz inhibitor domain maps to 6–25 (VCELPKEVGGPCRGHIIPRY).

Its subcellular location is the secreted. Functionally, inhibits bovine trypsin, human plasma kallikrein and human neutrophil elastase. The polypeptide is Kunitz-type serine protease inhibitor 2 (Rhipicephalus microplus (Cattle tick)).